Consider the following 1406-residue polypeptide: DNA-directed RNA polymerase subunit beta' (1406 aa).

Residues cysteine 72, cysteine 74, cysteine 87, and cysteine 90 each coordinate Zn(2+). Residues aspartate 462, aspartate 464, and aspartate 466 each coordinate Mg(2+). Cysteine 816, cysteine 891, cysteine 898, and cysteine 901 together coordinate Zn(2+).

The protein belongs to the RNA polymerase beta' chain family. The RNAP catalytic core consists of 2 alpha, 1 beta, 1 beta' and 1 omega subunit. When a sigma factor is associated with the core the holoenzyme is formed, which can initiate transcription. Mg(2+) is required as a cofactor. Zn(2+) serves as cofactor.

The enzyme catalyses RNA(n) + a ribonucleoside 5'-triphosphate = RNA(n+1) + diphosphate. Its function is as follows. DNA-dependent RNA polymerase catalyzes the transcription of DNA into RNA using the four ribonucleoside triphosphates as substrates. The sequence is that of DNA-directed RNA polymerase subunit beta' from Psychrobacter arcticus (strain DSM 17307 / VKM B-2377 / 273-4).